Consider the following 665-residue polypeptide: tRNA 5-methylaminomethyl-2-thiouridine biosynthesis bifunctional protein MnmC (665 aa).

Residues 1–235 (MTITRHAQID…KWEVLRGTFI (235 aa)) are tRNA (mnm(5)s(2)U34)-methyltransferase. The tract at residues 266 to 665 (IGAGLAGCAT…RGKGKQTVGH (400 aa)) is FAD-dependent cmnm(5)s(2)U34 oxidoreductase.

The protein in the N-terminal section; belongs to the methyltransferase superfamily. tRNA (mnm(5)s(2)U34)-methyltransferase family. This sequence in the C-terminal section; belongs to the DAO family. Requires FAD as cofactor.

Its subcellular location is the cytoplasm. It carries out the reaction 5-aminomethyl-2-thiouridine(34) in tRNA + S-adenosyl-L-methionine = 5-methylaminomethyl-2-thiouridine(34) in tRNA + S-adenosyl-L-homocysteine + H(+). Its function is as follows. Catalyzes the last two steps in the biosynthesis of 5-methylaminomethyl-2-thiouridine (mnm(5)s(2)U) at the wobble position (U34) in tRNA. Catalyzes the FAD-dependent demodification of cmnm(5)s(2)U34 to nm(5)s(2)U34, followed by the transfer of a methyl group from S-adenosyl-L-methionine to nm(5)s(2)U34, to form mnm(5)s(2)U34. This Pseudomonas syringae pv. syringae (strain B728a) protein is tRNA 5-methylaminomethyl-2-thiouridine biosynthesis bifunctional protein MnmC.